We begin with the raw amino-acid sequence, 279 residues long: Small ribosomal subunit protein uS2 (279 aa).

The disordered stretch occupies residues 232–260 (KVDMEAAGENAPKGAGKKKNTKARMDKAE).

Belongs to the universal ribosomal protein uS2 family.

The sequence is that of Small ribosomal subunit protein uS2 from Phocaeicola vulgatus (strain ATCC 8482 / DSM 1447 / JCM 5826 / CCUG 4940 / NBRC 14291 / NCTC 11154) (Bacteroides vulgatus).